Reading from the N-terminus, the 237-residue chain is Proteasome subunit beta type-1 (237 aa).

It belongs to the peptidase T1B family. The 26S proteasome consists of a 20S proteasome core and two 19S regulatory subunits. The 20S proteasome core is a barrel-shaped complex made of 28 subunits that are arranged in four stacked rings. The two outer rings are each formed by seven alpha subunits, and the two inner rings are formed by seven beta subunits. The proteolytic activity is exerted by three beta-subunits psmb5, psmb6 and psmb7.

It localises to the cytoplasm. Its subcellular location is the nucleus. Non-catalytic component of the 20S core proteasome complex involved in the proteolytic degradation of most intracellular proteins. This complex plays numerous essential roles within the cell by associating with different regulatory particles. Associated with two 19S regulatory particles, forms the 26S proteasome and thus participates in the ATP-dependent degradation of ubiquitinated proteins. The 26S proteasome plays a key role in the maintenance of protein homeostasis by removing misfolded or damaged proteins that could impair cellular functions, and by removing proteins whose functions are no longer required. Associated with the PA200 or PA28, the 20S proteasome mediates ubiquitin-independent protein degradation. The sequence is that of Proteasome subunit beta type-1 from Danio rerio (Zebrafish).